The following is a 207-amino-acid chain: Dephospho-CoA kinase (207 aa).

The region spanning 10–207 (ILGLTGGIGS…FYLTLKGGQP (198 aa)) is the DPCK domain. Residue 18–23 (GSGKSA) coordinates ATP.

The protein belongs to the CoaE family.

The protein localises to the cytoplasm. It carries out the reaction 3'-dephospho-CoA + ATP = ADP + CoA + H(+). Its pathway is cofactor biosynthesis; coenzyme A biosynthesis; CoA from (R)-pantothenate: step 5/5. Functionally, catalyzes the phosphorylation of the 3'-hydroxyl group of dephosphocoenzyme A to form coenzyme A. In Pseudomonas putida (strain ATCC 47054 / DSM 6125 / CFBP 8728 / NCIMB 11950 / KT2440), this protein is Dephospho-CoA kinase.